Reading from the N-terminus, the 70-residue chain is Conotoxin TxMMSK-02 (70 aa).

The signal sequence occupies residues 1 to 20 (MMSKLGALLTICLLLFSLTA). Residues 21–53 (VPLDGDQHADQPAQRLQDRIPTEDHPLFDPNKR) constitute a propeptide that is removed on maturation. 3 cysteine pairs are disulfide-bonded: Cys-54–Cys-68, Cys-55–Cys-64, and Cys-60–Cys-67. A 4-hydroxyproline modification is found at Pro-66. Tyr-69 is modified (tyrosine amide).

This sequence belongs to the conotoxin M superfamily. In terms of tissue distribution, expressed by the venom duct.

Its subcellular location is the secreted. The polypeptide is Conotoxin TxMMSK-02 (Conus textile (Cloth-of-gold cone)).